A 367-amino-acid chain; its full sequence is tRNA/tmRNA (uracil-C(5))-methyltransferase (367 aa).

S-adenosyl-L-methionine-binding residues include Gln182, Tyr210, Asn215, Glu231, and Asp293. Cys318 (nucleophile) is an active-site residue. Residue Glu352 is the Proton acceptor of the active site.

Belongs to the class I-like SAM-binding methyltransferase superfamily. RNA M5U methyltransferase family. TrmA subfamily.

It carries out the reaction uridine(54) in tRNA + S-adenosyl-L-methionine = 5-methyluridine(54) in tRNA + S-adenosyl-L-homocysteine + H(+). The catalysed reaction is uridine(341) in tmRNA + S-adenosyl-L-methionine = 5-methyluridine(341) in tmRNA + S-adenosyl-L-homocysteine + H(+). Dual-specificity methyltransferase that catalyzes the formation of 5-methyluridine at position 54 (m5U54) in all tRNAs, and that of position 341 (m5U341) in tmRNA (transfer-mRNA). The chain is tRNA/tmRNA (uracil-C(5))-methyltransferase from Neisseria meningitidis serogroup C (strain 053442).